We begin with the raw amino-acid sequence, 307 residues long: UPF0276 protein Bphyt_5128 (307 aa).

Belongs to the UPF0276 family.

The chain is UPF0276 protein Bphyt_5128 from Paraburkholderia phytofirmans (strain DSM 17436 / LMG 22146 / PsJN) (Burkholderia phytofirmans).